Reading from the N-terminus, the 372-residue chain is uncharacterized protein (372 aa).

Basic residues-rich tracts occupy residues 1–11 and 38–48; these read MNKILGLRRAK and RLRRGMQRLSR. Residues 1–127 are disordered; that stretch reads MNKILGLRRA…NSGTRDTPCW (127 aa). Positions 50–61 are enriched in basic and acidic residues; the sequence is GYGDNRRSRGSE. A compositionally biased stretch (polar residues) spans 93-104; sequence GKTSPCGSSGTP.

This is an uncharacterized protein from Psittacid herpesvirus 1 (isolate Amazon parrot/-/97-0001/1997) (PsHV-1).